The following is an 857-amino-acid chain: Cation/H(+) antiporter 25 (857 aa).

Helical transmembrane passes span 65–85 (FSTF…VYVL), 93–110 (RIVC…SMLG), 122–142 (PIAN…FFFL), 161–181 (YIAA…GAAL), 194–214 (SIGG…YTVL), 227–247 (FAMS…VLFE), 259–279 (YSVI…LLVV), 313–333 (FLTD…GLVV), 385–405 (IYMS…AALF), 413–435 (SLTL…LHWI), and 447–467 (VMVL…SFLY). A Phosphoserine modification is found at serine 855.

Belongs to the monovalent cation:proton antiporter 2 (CPA2) transporter (TC 2.A.37) family. CHX (TC 2.A.37.4) subfamily. As to expression, specifically expressed in pollen.

It localises to the membrane. In terms of biological role, may operate as a cation/H(+) antiporter. The chain is Cation/H(+) antiporter 25 (CHX25) from Arabidopsis thaliana (Mouse-ear cress).